The following is a 137-amino-acid chain: uncharacterized protein (137 aa).

Positions 1–19 are cleaved as a signal peptide; it reads MVAFYGIFLFGTVYLFGLA.

This is an uncharacterized protein from Acanthamoeba polyphaga (Amoeba).